Consider the following 426-residue polypeptide: Neuromedin-U receptor 1 (426 aa).

At methionine 1–alanine 65 the chain is on the extracellular side. N-linked (GlcNAc...) asparagine glycans are attached at residues asparagine 7, asparagine 27, and asparagine 41. A helical transmembrane segment spans residues threonine 66 to leucine 86. Residues arginine 87 to tyrosine 97 are Cytoplasmic-facing. A helical transmembrane segment spans residues tyrosine 98 to leucine 118. Residues tyrosine 119–threonine 138 lie on the Extracellular side of the membrane. Cysteine 134 and cysteine 219 are joined by a disulfide. The helical transmembrane segment at leucine 139–valine 161 threads the bilayer. The Cytoplasmic portion of the chain corresponds to alanine 162–valine 181. A helical transmembrane segment spans residues leucine 182–isoleucine 202. Over arginine 203–threonine 235 the chain is Extracellular. The chain crosses the membrane as a helical span at residues alanine 236–leucine 256. The Cytoplasmic segment spans residues arginine 257–glutamine 294. Residues valine 295–alanine 315 traverse the membrane as a helical segment. The Extracellular portion of the chain corresponds to aspartate 316–histidine 338. A helical transmembrane segment spans residues valine 339–methionine 359. Residues serine 360–serine 426 lie on the Cytoplasmic side of the membrane.

It belongs to the G-protein coupled receptor 1 family. As to expression, expressed in greatest abundance in peripheral organs, particularly in elements of the gastrointestinal and urogenital systems with highest levels in testes. In central nervous system structures express levels are much lower than those seen in peripheral organs. Within the CNS, has been detected in highest abundance in the cerebellum, dorsal root ganglia, hippocampus, and spinal cord.

Its subcellular location is the cell membrane. Its function is as follows. Receptor for the neuromedin-U and neuromedin-S neuropeptides. This is Neuromedin-U receptor 1 (NMUR1) from Homo sapiens (Human).